A 125-amino-acid polypeptide reads, in one-letter code: Oxytocin-neurophysin 1 (125 aa).

Residues 1-19 (MAGPSLACCLLGLLALTSA) form the signal peptide. Cys-20 and Cys-25 form a disulfide bridge. Glycine amide is present on Gly-28. 7 disulfides stabilise this stretch: Cys-41–Cys-85, Cys-44–Cys-58, Cys-52–Cys-75, Cys-59–Cys-65, Cys-92–Cys-104, Cys-98–Cys-116, and Cys-105–Cys-110.

The protein belongs to the vasopressin/oxytocin family. In terms of assembly, interacts with oxytocin receptor (Ki=1.5 nM). Interacts with vasopressin V1aR/AVPR1A (Ki=37 nM), V1bR/AVPR1B (Ki=222 nM) and V2R/AVPR2 receptors (Ki=823 nM).

It is found in the secreted. In terms of biological role, neurophysin 1 specifically binds oxytocin. Functionally, oxytocin causes contraction of the smooth muscle of the uterus and of the mammary gland. Acts by binding to oxytocin receptor (OXTR). The sequence is that of Oxytocin-neurophysin 1 (OXT) from Homo sapiens (Human).